Consider the following 141-residue polypeptide: Large ribosomal subunit protein uL11 (141 aa).

The protein belongs to the universal ribosomal protein uL11 family. Part of the ribosomal stalk of the 50S ribosomal subunit. Interacts with L10 and the large rRNA to form the base of the stalk. L10 forms an elongated spine to which L12 dimers bind in a sequential fashion forming a multimeric L10(L12)X complex. In terms of processing, one or more lysine residues are methylated.

Functionally, forms part of the ribosomal stalk which helps the ribosome interact with GTP-bound translation factors. This chain is Large ribosomal subunit protein uL11, found in Prochlorococcus marinus (strain MIT 9215).